A 959-amino-acid chain; its full sequence is Isoleucine--tRNA ligase (959 aa).

The short motif at 60–70 (PYANGSLHMGH) is the 'HIGH' region element. Residue Glu-569 participates in L-isoleucyl-5'-AMP binding. The short motif at 610–614 (KMSKS) is the 'KMSKS' region element. Residue Lys-613 participates in ATP binding. Zn(2+)-binding residues include Cys-928, Cys-931, Cys-948, and Cys-951.

Belongs to the class-I aminoacyl-tRNA synthetase family. IleS type 1 subfamily. Monomer. It depends on Zn(2+) as a cofactor.

The protein resides in the cytoplasm. It catalyses the reaction tRNA(Ile) + L-isoleucine + ATP = L-isoleucyl-tRNA(Ile) + AMP + diphosphate. Catalyzes the attachment of isoleucine to tRNA(Ile). As IleRS can inadvertently accommodate and process structurally similar amino acids such as valine, to avoid such errors it has two additional distinct tRNA(Ile)-dependent editing activities. One activity is designated as 'pretransfer' editing and involves the hydrolysis of activated Val-AMP. The other activity is designated 'posttransfer' editing and involves deacylation of mischarged Val-tRNA(Ile). The chain is Isoleucine--tRNA ligase from Gloeothece citriformis (strain PCC 7424) (Cyanothece sp. (strain PCC 7424)).